The chain runs to 221 residues: Ras-related protein Rab-27A (221 aa).

N-acetylserine is present on S2. Residue S2 is modified to Phosphoserine. 16 to 24 (GDSGVGKTS) lines the GTP pocket. The Effector region motif lies at 38–46 (FITTVGIDF). GTP contacts are provided by residues 74–78 (DTAGQ), 133–136 (NKSD), and 163–165 (SAA). The cysteines at positions 123 and 188 are disulfide-linked. S-geranylgeranyl cysteine attachment occurs at residues C219 and C221. Cysteine methyl ester is present on C221.

The protein belongs to the small GTPase superfamily. Rab family. Binds SYTL1, SLAC2B, MYRIP, SYTL3, SYTL4 and SYTL5. Interacts with RPH3A and RPH3A. Binds MLPH and SYTL2. Interacts with UNC13D. Does not interact with the BLOC-3 complex (heterodimer of HPS1 and HPS4). Interacts (GDP-bound form preferentially) with DENND10.

The protein localises to the membrane. Its subcellular location is the melanosome. The protein resides in the late endosome. It localises to the lysosome. The catalysed reaction is GTP + H2O = GDP + phosphate + H(+). With respect to regulation, regulated by guanine nucleotide exchange factors (GEFs) which promote the exchange of bound GDP for free GTP, GTPase activating proteins (GAPs) which increase the GTP hydrolysis activity, and GDP dissociation inhibitors which inhibit the dissociation of the nucleotide from the GTPase. Activated by GEFs such as DENND10. Small GTPase which cycles between active GTP-bound and inactive GDP-bound states. In its active state, binds to a variety of effector proteins to regulate homeostasis of late endocytic pathway, including endosomal positioning, maturation and secretion. Plays a role in cytotoxic granule exocytosis in lymphocytes. Required for both granule maturation and granule docking and priming at the immunologic synapse. The polypeptide is Ras-related protein Rab-27A (RAB27A) (Canis lupus familiaris (Dog)).